The primary structure comprises 283 residues: NFU1 iron-sulfur cluster scaffold homolog, mitochondrial (283 aa).

The N-terminal 65 residues, 1 to 65 (MSKFLSQAAI…ELRMPVACRR (65 aa)), are a transit peptide targeting the mitochondrion. A nifU region spans residues 182–250 (IKELLDTRIR…IPEVESVEQV (69 aa)). Residues C219 and C222 each contribute to the [4Fe-4S] cluster site.

This sequence belongs to the NifU family.

It localises to the mitochondrion. Its function is as follows. Molecular scaffold for [Fe-S] cluster assembly of mitochondrial iron-sulfur proteins. The protein is NFU1 iron-sulfur cluster scaffold homolog, mitochondrial of Drosophila sechellia (Fruit fly).